The chain runs to 350 residues: 3-dehydroquinate synthase (350 aa).

Residues 106 to 110 (GVVGD), 130 to 131 (TS), Lys-143, and Lys-152 each bind NAD(+). Zn(2+) contacts are provided by Glu-185, His-246, and His-263.

Belongs to the sugar phosphate cyclases superfamily. Dehydroquinate synthase family. It depends on Co(2+) as a cofactor. The cofactor is Zn(2+). NAD(+) serves as cofactor.

Its subcellular location is the cytoplasm. It catalyses the reaction 7-phospho-2-dehydro-3-deoxy-D-arabino-heptonate = 3-dehydroquinate + phosphate. It participates in metabolic intermediate biosynthesis; chorismate biosynthesis; chorismate from D-erythrose 4-phosphate and phosphoenolpyruvate: step 2/7. Functionally, catalyzes the conversion of 3-deoxy-D-arabino-heptulosonate 7-phosphate (DAHP) to dehydroquinate (DHQ). The protein is 3-dehydroquinate synthase of Clostridium perfringens (strain SM101 / Type A).